The primary structure comprises 263 residues: Tryptophan synthase alpha chain (263 aa).

Catalysis depends on proton acceptor residues Glu-51 and Asp-62.

It belongs to the TrpA family. In terms of assembly, tetramer of two alpha and two beta chains.

It carries out the reaction (1S,2R)-1-C-(indol-3-yl)glycerol 3-phosphate + L-serine = D-glyceraldehyde 3-phosphate + L-tryptophan + H2O. It participates in amino-acid biosynthesis; L-tryptophan biosynthesis; L-tryptophan from chorismate: step 5/5. In terms of biological role, the alpha subunit is responsible for the aldol cleavage of indoleglycerol phosphate to indole and glyceraldehyde 3-phosphate. The chain is Tryptophan synthase alpha chain from Methanosarcina barkeri (strain Fusaro / DSM 804).